A 194-amino-acid polypeptide reads, in one-letter code: Peptidyl-tRNA hydrolase (194 aa).

TRNA is bound at residue Y21. Residue H26 is the Proton acceptor of the active site. Residues Y72, N74, and N120 each contribute to the tRNA site.

It belongs to the PTH family. As to quaternary structure, monomer.

It is found in the cytoplasm. It catalyses the reaction an N-acyl-L-alpha-aminoacyl-tRNA + H2O = an N-acyl-L-amino acid + a tRNA + H(+). Functionally, hydrolyzes ribosome-free peptidyl-tRNAs (with 1 or more amino acids incorporated), which drop off the ribosome during protein synthesis, or as a result of ribosome stalling. Catalyzes the release of premature peptidyl moieties from peptidyl-tRNA molecules trapped in stalled 50S ribosomal subunits, and thus maintains levels of free tRNAs and 50S ribosomes. This is Peptidyl-tRNA hydrolase from Halorhodospira halophila (strain DSM 244 / SL1) (Ectothiorhodospira halophila (strain DSM 244 / SL1)).